A 295-amino-acid chain; its full sequence is MNVQTMILTLQSFWAKQNCIILNAYDTEKGAGTMSPHTLLRTIGPEPWNVAYVEPSRRPADGRYGENPNRLYQHHQFQVIMKPSPLNIQELYLDSLRALGIDPLKHDIRFVEDNWENPTLGCAGLGWEVWLDGMEITQFTYFQQVGGMEANPVSAEITYGLERLATYIQDKENVFDLEWVEGFTYGDIFLQPEYEHSTYTFEVSNVDMLFDLFSTYEKEAERALARDLVFPAYDYILKCSHSFNLLDARGAISVTERTGYIARVRTLARKAARKYYEEREKLGFPMLKKEDAHDE.

It belongs to the class-II aminoacyl-tRNA synthetase family. Tetramer of two alpha and two beta subunits.

Its subcellular location is the cytoplasm. It catalyses the reaction tRNA(Gly) + glycine + ATP = glycyl-tRNA(Gly) + AMP + diphosphate. The chain is Glycine--tRNA ligase alpha subunit from Shouchella clausii (strain KSM-K16) (Alkalihalobacillus clausii).